The following is a 179-amino-acid chain: Large ribosomal subunit protein uL5 (179 aa).

The protein belongs to the universal ribosomal protein uL5 family. Part of the 50S ribosomal subunit; part of the 5S rRNA/L5/L18/L25 subcomplex. Contacts the 5S rRNA and the P site tRNA. Forms a bridge to the 30S subunit in the 70S ribosome.

Functionally, this is one of the proteins that bind and probably mediate the attachment of the 5S RNA into the large ribosomal subunit, where it forms part of the central protuberance. In the 70S ribosome it contacts protein S13 of the 30S subunit (bridge B1b), connecting the 2 subunits; this bridge is implicated in subunit movement. Contacts the P site tRNA; the 5S rRNA and some of its associated proteins might help stabilize positioning of ribosome-bound tRNAs. This chain is Large ribosomal subunit protein uL5, found in Bacillus cereus (strain 03BB102).